Consider the following 110-residue polypeptide: Large ribosomal subunit protein uL22 (110 aa).

The protein belongs to the universal ribosomal protein uL22 family. Part of the 50S ribosomal subunit.

In terms of biological role, this protein binds specifically to 23S rRNA; its binding is stimulated by other ribosomal proteins, e.g. L4, L17, and L20. It is important during the early stages of 50S assembly. It makes multiple contacts with different domains of the 23S rRNA in the assembled 50S subunit and ribosome. Its function is as follows. The globular domain of the protein is located near the polypeptide exit tunnel on the outside of the subunit, while an extended beta-hairpin is found that lines the wall of the exit tunnel in the center of the 70S ribosome. The chain is Large ribosomal subunit protein uL22 from Buchnera aphidicola subsp. Acyrthosiphon pisum (strain 5A).